The chain runs to 413 residues: MENNTIPKHNTFYAIGLNYKKADAEIRGKFSIDAQSKSNLLQQAKTEGIESLIVTSTCNRTEIYGFAQHPFQLIKLLCENSKGTVEDFQKVAYVYKNQEAISHLFKVGTGLDSQILGDFEIISQIKIAFTESKALDLANSFMERLVNSVIQASKRIKTDTDISSGATSVSFASVQYIMKNVANIGEKNILLFGTGKIGRNTCENLVKHSKNEHITLINRTKDKAEKLAGKLNLIVKDYADLHIELQKADVLVVATGAQNPTIDKAILNLKKPLLILDLSIPKNVNSDVNELENVTLVHLDDLSQITDETLEKRKLHIPAAEAIIEEIKNEFSSWMNGRKYAPTIHALKAKLNTIKEKELIFQRKKLSNFDEEQAELISNRIIQKITNHFANHLKDEETMVDESIDYINKIFQL.

Residues threonine 57–arginine 60, serine 113, aspartate 118–glutamate 120, and glutamine 124 contribute to the substrate site. Residue cysteine 58 is the Nucleophile of the active site. Glycine 193–glycine 198 provides a ligand contact to NADP(+).

The protein belongs to the glutamyl-tRNA reductase family. As to quaternary structure, homodimer.

It carries out the reaction (S)-4-amino-5-oxopentanoate + tRNA(Glu) + NADP(+) = L-glutamyl-tRNA(Glu) + NADPH + H(+). Its pathway is porphyrin-containing compound metabolism; protoporphyrin-IX biosynthesis; 5-aminolevulinate from L-glutamyl-tRNA(Glu): step 1/2. Its function is as follows. Catalyzes the NADPH-dependent reduction of glutamyl-tRNA(Glu) to glutamate 1-semialdehyde (GSA). This chain is Glutamyl-tRNA reductase, found in Flavobacterium psychrophilum (strain ATCC 49511 / DSM 21280 / CIP 103535 / JIP02/86).